An 853-amino-acid polypeptide reads, in one-letter code: DNA mismatch repair protein MutS (853 aa).

614–621 (GPNMGGKS) is a binding site for ATP.

The protein belongs to the DNA mismatch repair MutS family.

Its function is as follows. This protein is involved in the repair of mismatches in DNA. It is possible that it carries out the mismatch recognition step. This protein has a weak ATPase activity. The chain is DNA mismatch repair protein MutS from Escherichia coli (strain SMS-3-5 / SECEC).